A 142-amino-acid polypeptide reads, in one-letter code: Large ribosomal subunit protein uL13 (142 aa).

It belongs to the universal ribosomal protein uL13 family. Part of the 50S ribosomal subunit.

In terms of biological role, this protein is one of the early assembly proteins of the 50S ribosomal subunit, although it is not seen to bind rRNA by itself. It is important during the early stages of 50S assembly. In Wigglesworthia glossinidia brevipalpis, this protein is Large ribosomal subunit protein uL13.